We begin with the raw amino-acid sequence, 360 residues long: Alpha-2-macroglobulin receptor-associated protein (360 aa).

A signal peptide spans 1–28 (MAPRRERVSTLPRLQLLVLLLLPLMLVP). Phosphoserine occurs at positions 53 and 138. Positions 184–302 (EKIQEYNVLL…KHNHYQKQLE (119 aa)) form a coiled coil. Residues 240-356 (RLRKVSHQGY…DLSSRVSRAR (117 aa)) form an LDL receptor binding region. N271 carries an N-linked (GlcNAc...) asparagine glycan. Positions 357–360 (HNEL) match the Prevents secretion from ER motif.

The protein belongs to the alpha-2-MRAP family. As to quaternary structure, interacts with the LRP1/alpha-2-macroglobulin receptor heavy and light chains; the interaction is transient and coincides with a reduction of ligand binding by the receptor. Interacts with LRP2/glycoprotein 330. Interacts with LRP1B; binding is followed by internalization and degradation. Interacts with LDLR. Interacts with SORL1. Interacts with LRP1; this interaction is followed by rapid internalization. N-glycosylated. Highly expressed in PYS-2 parietal endoderm cells and in the kidney. The RNA level increased about 10-fold during differentiation of F9 embryonal carcinoma cells to parietal endoderm cells.

It localises to the rough endoplasmic reticulum lumen. The protein localises to the endoplasmic reticulum-Golgi intermediate compartment lumen. It is found in the golgi apparatus. Its subcellular location is the cis-Golgi network. The protein resides in the golgi apparatus lumen. It localises to the endosome lumen. The protein localises to the cell surface. Its function is as follows. Molecular chaperone for LDL receptor-related proteins that may regulate their ligand binding activity along the secretory pathway. The polypeptide is Alpha-2-macroglobulin receptor-associated protein (Lrpap1) (Mus musculus (Mouse)).